Here is a 335-residue protein sequence, read N- to C-terminus: Nucleoid-associated protein YejK (335 aa).

This sequence belongs to the YejK family.

Its subcellular location is the cytoplasm. It is found in the nucleoid. This chain is Nucleoid-associated protein YejK, found in Shigella dysenteriae serotype 1 (strain Sd197).